The sequence spans 286 residues: ATP synthase gamma chain (286 aa).

It belongs to the ATPase gamma chain family. As to quaternary structure, F-type ATPases have 2 components, CF(1) - the catalytic core - and CF(0) - the membrane proton channel. CF(1) has five subunits: alpha(3), beta(3), gamma(1), delta(1), epsilon(1). CF(0) has three main subunits: a, b and c.

It is found in the cell inner membrane. In terms of biological role, produces ATP from ADP in the presence of a proton gradient across the membrane. The gamma chain is believed to be important in regulating ATPase activity and the flow of protons through the CF(0) complex. The sequence is that of ATP synthase gamma chain from Flavobacterium psychrophilum (strain ATCC 49511 / DSM 21280 / CIP 103535 / JIP02/86).